The following is an 828-amino-acid chain: USP6 N-terminal-like protein (828 aa).

Residue methionine 1 is modified to N-acetylmethionine. One can recognise a Rab-GAP TBC domain in the interval 100–292 (GIPLQLRGEV…RIWDIYIFEG (193 aa)). The segment covering 355–367 (DLPEPGKEDEYPK) has biased composition (basic and acidic residues). The disordered stretch occupies residues 355 to 722 (DLPEPGKEDE…NSGSPKNGKL (368 aa)). Serine 391, serine 396, and serine 400 each carry phosphoserine. Over residues 434–451 (KSVEEESKKLKDEADFQR) the composition is skewed to basic and acidic residues. Residues 465–478 (NHAAANQNSNATSN) show a composition bias toward low complexity. 2 stretches are compositionally biased toward basic and acidic residues: residues 498–508 (RTAKYTMEGKG) and 535–544 (KALDAEDGKR). Serine 546 and serine 549 each carry phosphoserine. Tyrosine 582 bears the Phosphotyrosine mark. Serine 585 is modified (phosphoserine). The segment covering 592–603 (PSSSPSKVSNKF) has biased composition (polar residues). A phosphoserine mark is found at serine 642, serine 655, serine 659, serine 676, and serine 680. Polar residues-rich tracts occupy residues 648-666 (TANS…QLNP) and 673-683 (STLSVSASPEK). A compositionally biased stretch (low complexity) spans 686 to 697 (SRPSPLVLPSSR). Serine 716 is subject to Phosphoserine. Phosphotyrosine is present on tyrosine 729. Positions 789–817 (KASPAAEDASPSGYPYSGPPPPAYHYRNR) are disordered.

In terms of assembly, interacts with EPS8. Widely expressed.

The protein resides in the golgi apparatus. Its subcellular location is the cytoplasmic vesicle. In terms of biological role, acts as a GTPase-activating protein for RAB5A and RAB43. Involved in receptor trafficking. In complex with EPS8 inhibits internalization of EGFR. Involved in retrograde transport from the endocytic pathway to the Golgi apparatus. Involved in the transport of Shiga toxin from early and recycling endosomes to the trans-Golgi network. Required for structural integrity of the Golgi complex. The chain is USP6 N-terminal-like protein (USP6NL) from Homo sapiens (Human).